The sequence spans 170 residues: Lipoprotein signal peptidase (170 aa).

The next 4 membrane-spanning stretches (helical) occupy residues 11-31 (LSWLWLSLLVLVIDQASKFYF), 41-61 (IVVIPDLFSWTLAYNTGAAFS), 69-89 (WQRWLFALIAIAVSAVLVVWL), and 95-115 (NETWLAIALALVLGGALGNLY). Catalysis depends on residues D125 and D144. Residues 136 to 156 (YFPAFNFADSAITVGAVMLAL) form a helical membrane-spanning segment.

The protein belongs to the peptidase A8 family.

The protein resides in the cell inner membrane. It carries out the reaction Release of signal peptides from bacterial membrane prolipoproteins. Hydrolyzes -Xaa-Yaa-Zaa-|-(S,diacylglyceryl)Cys-, in which Xaa is hydrophobic (preferably Leu), and Yaa (Ala or Ser) and Zaa (Gly or Ala) have small, neutral side chains.. The protein operates within protein modification; lipoprotein biosynthesis (signal peptide cleavage). This protein specifically catalyzes the removal of signal peptides from prolipoproteins. This is Lipoprotein signal peptidase from Pseudomonas fluorescens (strain Pf0-1).